The sequence spans 250 residues: tRNA (guanine-N(1)-)-methyltransferase (250 aa).

S-adenosyl-L-methionine contacts are provided by residues G114 and 134–139 (IGDYVL).

Belongs to the RNA methyltransferase TrmD family. As to quaternary structure, homodimer.

It localises to the cytoplasm. It carries out the reaction guanosine(37) in tRNA + S-adenosyl-L-methionine = N(1)-methylguanosine(37) in tRNA + S-adenosyl-L-homocysteine + H(+). Specifically methylates guanosine-37 in various tRNAs. In Moorella thermoacetica (strain ATCC 39073 / JCM 9320), this protein is tRNA (guanine-N(1)-)-methyltransferase.